A 131-amino-acid chain; its full sequence is RutC family protein YjgH (131 aa).

The protein belongs to the RutC family.

This Escherichia coli (strain K12) protein is RutC family protein YjgH (yjgH).